Here is a 104-residue protein sequence, read N- to C-terminus: Nucleoid-associated protein GAU_1113 (104 aa).

Belongs to the YbaB/EbfC family. As to quaternary structure, homodimer.

The protein localises to the cytoplasm. The protein resides in the nucleoid. Functionally, binds to DNA and alters its conformation. May be involved in regulation of gene expression, nucleoid organization and DNA protection. The protein is Nucleoid-associated protein GAU_1113 of Gemmatimonas aurantiaca (strain DSM 14586 / JCM 11422 / NBRC 100505 / T-27).